Reading from the N-terminus, the 457-residue chain is Argininosuccinate lyase (457 aa).

This sequence belongs to the lyase 1 family. Argininosuccinate lyase subfamily.

The protein localises to the cytoplasm. It catalyses the reaction 2-(N(omega)-L-arginino)succinate = fumarate + L-arginine. It participates in amino-acid biosynthesis; L-arginine biosynthesis; L-arginine from L-ornithine and carbamoyl phosphate: step 3/3. This is Argininosuccinate lyase from Yersinia pseudotuberculosis serotype O:1b (strain IP 31758).